Here is a 126-residue protein sequence, read N- to C-terminus: MFS14 protein (126 aa).

The segment at residues 1 to 23 (MALEAATAPRALLAACLVLLVLG) is a signal peptide (or 24, or 26).

In terms of tissue distribution, enhanced expression in male flowers. Accumulates in the tapetum.

The protein is MFS14 protein (MFS14) of Zea mays (Maize).